The following is a 604-amino-acid chain: Aspartate--tRNA(Asp/Asn) ligase (604 aa).

Glu-175 contacts L-aspartate. The tract at residues 199–202 is aspartate; sequence QQFK. L-aspartate is bound by residues Arg-221 and His-456. Residue 221 to 223 participates in ATP binding; the sequence is RDE. Glu-496 serves as a coordination point for ATP. Arg-503 provides a ligand contact to L-aspartate. 548–551 contributes to the ATP binding site; the sequence is GVDR.

Belongs to the class-II aminoacyl-tRNA synthetase family. Type 1 subfamily. As to quaternary structure, homodimer.

The protein localises to the cytoplasm. The enzyme catalyses tRNA(Asx) + L-aspartate + ATP = L-aspartyl-tRNA(Asx) + AMP + diphosphate. Its function is as follows. Aspartyl-tRNA synthetase with relaxed tRNA specificity since it is able to aspartylate not only its cognate tRNA(Asp) but also tRNA(Asn). Reaction proceeds in two steps: L-aspartate is first activated by ATP to form Asp-AMP and then transferred to the acceptor end of tRNA(Asp/Asn). This chain is Aspartate--tRNA(Asp/Asn) ligase, found in Methylobacterium nodulans (strain LMG 21967 / CNCM I-2342 / ORS 2060).